Consider the following 91-residue polypeptide: MSEEDVKSHKIEFPCEDYPIKVIGDTVVGFRDTVIEILSKHAKVDLSTLAERQSKEGKYTTVQLHIVAESENQLHDINSALRATGIVKMVL.

Belongs to the UPF0250 family.

The sequence is that of UPF0250 protein PSEEN4821 from Pseudomonas entomophila (strain L48).